The following is an 83-amino-acid chain: Defensin-like protein 194 (83 aa).

A signal peptide spans 1 to 27 (MAMKSVSNFAIFLILFLVTSEISEIEA). Cystine bridges form between Cys-32/Cys-78, Cys-44/Cys-68, Cys-53/Cys-73, and Cys-57/Cys-75.

The protein belongs to the DEFL family. Protease inhibitor I18 (RTI/MTI-2) subfamily.

The protein resides in the secreted. The polypeptide is Defensin-like protein 194 (ATTI3) (Arabidopsis thaliana (Mouse-ear cress)).